We begin with the raw amino-acid sequence, 178 residues long: Dual-action ribosomal maturation protein DarP (178 aa).

This sequence belongs to the DarP family.

It is found in the cytoplasm. Functionally, member of a network of 50S ribosomal subunit biogenesis factors which assembles along the 30S-50S interface, preventing incorrect 23S rRNA structures from forming. Promotes peptidyl transferase center (PTC) maturation. This Mannheimia succiniciproducens (strain KCTC 0769BP / MBEL55E) protein is Dual-action ribosomal maturation protein DarP.